A 205-amino-acid chain; its full sequence is Probable thymidylate kinase (205 aa).

9 to 16 (GIDGVGKS) is an ATP binding site.

The protein belongs to the thymidylate kinase family.

The catalysed reaction is dTMP + ATP = dTDP + ADP. This is Probable thymidylate kinase from Caldivirga maquilingensis (strain ATCC 700844 / DSM 13496 / JCM 10307 / IC-167).